The primary structure comprises 1127 residues: Zinc finger protein basonuclin-2 (1127 aa).

The interval Ser-44–Asp-67 is disordered. Positions Val-49–Asp-67 are enriched in basic and acidic residues. A Glycyl lysine isopeptide (Lys-Gly) (interchain with G-Cter in SUMO2) cross-link involves residue Lys-305. Residues Ser-386 to Ser-450 are disordered. The segment covering Asn-389–Ser-400 has biased composition (low complexity). Positions Pro-403–Glu-422 are enriched in polar residues. Glycyl lysine isopeptide (Lys-Gly) (interchain with G-Cter in SUMO2) cross-links involve residues Lys-424, Lys-444, and Lys-449. The segment at Val-469–His-492 adopts a C2H2-type 1 zinc-finger fold. Residue Ser-589 is modified to Phosphoserine. A Glycyl lysine isopeptide (Lys-Gly) (interchain with G-Cter in SUMO2) cross-link involves residue Lys-669. Positions Ile-675 to Leu-772 are disordered. Over residues Asp-676–Asn-689 the composition is skewed to acidic residues. Basic and acidic residues-rich tracts occupy residues Met-698 to Asp-708 and Glu-747 to Leu-772. The segment at Lys-861–His-884 adopts a C2H2-type 2 zinc-finger fold. Glycyl lysine isopeptide (Lys-Gly) (interchain with G-Cter in SUMO2) cross-links involve residues Lys-922 and Lys-947. Disordered regions lie at residues Leu-955–Gly-976 and Leu-996–Gly-1041. Residues Ala-1010–Gly-1023 are compositionally biased toward acidic residues. 2 consecutive C2H2-type zinc fingers follow at residues Ile-1063–His-1086 and His-1091–His-1118. Residues Ser-1107–Asp-1127 form a disordered region.

Highly expressed in ovary, testis and kidney. Expressed at moderate levels in skin and small intestine, and at lower levels in lung. Trace amounts of expression detected in liver and colon. Not detected in brain, spleen or thymus.

It localises to the nucleus. Probable transcription factor specific for skin keratinocytes. May play a role in the differentiation of spermatozoa and oocytes. May also play an important role in early urinary-tract development. The polypeptide is Zinc finger protein basonuclin-2 (Mus musculus (Mouse)).